The chain runs to 224 residues: Probable Brix domain-containing ribosomal biogenesis protein (224 aa).

A Brix domain is found at 1-196 (MMLITTSHRP…IWIMEDGRRW (196 aa)).

Functionally, probably involved in the biogenesis of the ribosome. This chain is Probable Brix domain-containing ribosomal biogenesis protein, found in Pyrococcus horikoshii (strain ATCC 700860 / DSM 12428 / JCM 9974 / NBRC 100139 / OT-3).